A 147-amino-acid chain; its full sequence is Hemoglobin subunit epsilon (147 aa).

The Globin domain occupies 3–147 (HFTAEEKAAV…VAIALAHKYH (145 aa)). Phosphoserine occurs at positions 14 and 51. 2 residues coordinate heme b: His64 and His93.

Belongs to the globin family. Heterotetramer of two alpha chains and two epsilon chains in early embryonic hemoglobin Gower-2; two zeta chains and two epsilon chains in early embryonic hemoglobin Gower-1. As to expression, red blood cells.

Its function is as follows. The epsilon chain is a beta-type chain of early mammalian embryonic hemoglobin. This chain is Hemoglobin subunit epsilon (HBE1), found in Pongo pygmaeus (Bornean orangutan).